The sequence spans 160 residues: Putative antiporter subunit mnhE2 (160 aa).

A run of 3 helical transmembrane segments spans residues 22 to 42 (SFQF…IYIL), 61 to 81 (FLGV…NYIL), and 102 to 122 (WAIT…VIRI).

This sequence belongs to the CPA3 antiporters (TC 2.A.63) subunit E family. May form a heterooligomeric complex that consists of seven subunits: mnhA2, mnhB2, mnhC2, mnhD2, mnhE2, mnhF2 and mnhG2.

It localises to the cell membrane. This chain is Putative antiporter subunit mnhE2 (mnhE2), found in Staphylococcus haemolyticus (strain JCSC1435).